Reading from the N-terminus, the 454-residue chain is Zinc finger protein 474 (454 aa).

The interval 48–85 (RGEKIKTNPRKNRPGTVILSKQSSRRIMSGSQPRPPVI) is disordered. Polar residues predominate over residues 66–79 (LSKQSSRRIMSGSQ). The segment at 91-120 (GFRVCYICGREFGSQSLGIHEPQCLEKWRV) adopts a C2HC/C3H-type 1 zinc-finger fold. Positions 95, 98, 110, and 114 each coordinate Zn(2+). The segment at 125–146 (LPKHLRRPEPSKPPPFSGSGSY) is disordered. 5 C2HC/C3H-type zinc fingers span residues 162–191 (QLLP…KVEG), 218–247 (RTVI…KWKV), 281–310 (QLVS…QPSG), 352–381 (PTIV…KWHN), and 425–454 (QLVP…KVAK). Residues cysteine 166, cysteine 169, histidine 181, cysteine 185, cysteine 222, cysteine 225, histidine 237, and cysteine 241 each contribute to the Zn(2+) site. The segment at 256-282 (FRQPLPQKPQPLLTGQPKHAGPRQGQL) is disordered. Zn(2+)-binding residues include cysteine 285, cysteine 288, histidine 300, cysteine 304, cysteine 356, cysteine 359, histidine 371, cysteine 375, cysteine 429, cysteine 432, histidine 444, and cysteine 448. A disordered region spans residues 299–345 (VHQRSCKAQPSGPKVQDLTLGSRGGLKESTNPKPQRNMAAPPVTDKP).

Zn(2+) serves as cofactor.

The sequence is that of Zinc finger protein 474 (ZNF474) from Bos taurus (Bovine).